The chain runs to 277 residues: Caspase-3 (277 aa).

The residue at position 1 (Met1) is an N-acetylmethionine. 2 consecutive propeptides follow at residues 1 to 9 and 10 to 28; these read MENNKTSVD and SKSI…KSVD. Lys11 bears the N6-acetyllysine mark. Position 26 is a phosphoserine (Ser26). Active-site residues include His121 and Cys163. Position 163 is an S-nitrosocysteine; in inhibited form (Cys163).

The protein belongs to the peptidase C14A family. Heterotetramer that consists of two anti-parallel arranged heterodimers, each one formed by a 17 kDa (p17) and a 12 kDa (p12) subunit. Interacts with BIRC6/bruce. In terms of processing, cleavage by granzyme B, caspase-6, caspase-8 and caspase-10 generates the two active subunits. Additional processing of the propeptides is likely due to the autocatalytic activity of the activated protease. Active heterodimers between the small subunit of caspase-7 protease and the large subunit of caspase-3 also occur and vice versa. S-nitrosylated on its catalytic site cysteine in unstimulated cell lines and denitrosylated upon activation of the Fas apoptotic pathway, associated with an increase in intracellular caspase activity. Fas therefore activates caspase-3 not only by inducing the cleavage of the caspase zymogen to its active subunits, but also by stimulating the denitrosylation of its active site thiol. Post-translationally, ubiquitinated by BIRC6; this activity is inhibited by DIABLO/SMAC. Highest expression in spleen, lung, liver, kidney and heart. Lower expression in brain, skeletal muscle and testis.

The protein localises to the cytoplasm. It carries out the reaction Strict requirement for an Asp residue at positions P1 and P4. It has a preferred cleavage sequence of Asp-Xaa-Xaa-Asp-|- with a hydrophobic amino-acid residue at P2 and a hydrophilic amino-acid residue at P3, although Val or Ala are also accepted at this position.. With respect to regulation, inhibited by BIRC6; following inhibition of BIRC6-caspase binding by DIABLO/SMAC, BIRC6 is subjected to caspase cleavage, leading to an increase in active caspases. In terms of biological role, thiol protease that acts as a major effector caspase involved in the execution phase of apoptosis. Following cleavage and activation by initiator caspases (CASP8, CASP9 and/or CASP10), mediates execution of apoptosis by catalyzing cleavage of many proteins. At the onset of apoptosis, it proteolytically cleaves poly(ADP-ribose) polymerase PARP1 at a '216-Asp-|-Gly-217' bond. Cleaves and activates sterol regulatory element binding proteins (SREBPs) between the basic helix-loop-helix leucine zipper domain and the membrane attachment domain. Cleaves and activates caspase-6, -7 and -9 (CASP6, CASP7 and CASP9, respectively). Cleaves and inactivates interleukin-18 (IL18). Triggers cell adhesion in sympathetic neurons through RET cleavage. Cleaves IL-1 beta between an Asp and an Ala, releasing the mature cytokine which is involved in a variety of inflammatory processes. Cleaves and inhibits serine/threonine-protein kinase AKT1 in response to oxidative stress. Acts as an inhibitor of type I interferon production during virus-induced apoptosis by mediating cleavage of antiviral proteins CGAS, IRF3 and MAVS, thereby preventing cytokine overproduction. Also involved in pyroptosis by mediating cleavage and activation of gasdermin-E (GSDME). Cleaves XRCC4 and phospholipid scramblase proteins XKR4, XKR8 and XKR9, leading to promote phosphatidylserine exposure on apoptotic cell surface. Cleaves BIRC6 following inhibition of BIRC6-caspase binding by DIABLO/SMAC. The polypeptide is Caspase-3 (Casp3) (Mus musculus (Mouse)).